The sequence spans 384 residues: tRNA 2-selenouridine synthase (384 aa).

In terms of domain architecture, Rhodanese spans 15–138 (FVAGKPLIDL…MRQYLIGVIE (124 aa)). Residue cysteine 98 is the S-selanylcysteine intermediate of the active site.

The protein belongs to the SelU family. In terms of assembly, monomer.

It carries out the reaction 5-methylaminomethyl-2-thiouridine(34) in tRNA + selenophosphate + (2E)-geranyl diphosphate + H2O + H(+) = 5-methylaminomethyl-2-selenouridine(34) in tRNA + (2E)-thiogeraniol + phosphate + diphosphate. The enzyme catalyses 5-methylaminomethyl-2-thiouridine(34) in tRNA + (2E)-geranyl diphosphate = 5-methylaminomethyl-S-(2E)-geranyl-thiouridine(34) in tRNA + diphosphate. The catalysed reaction is 5-methylaminomethyl-S-(2E)-geranyl-thiouridine(34) in tRNA + selenophosphate + H(+) = 5-methylaminomethyl-2-(Se-phospho)selenouridine(34) in tRNA + (2E)-thiogeraniol. It catalyses the reaction 5-methylaminomethyl-2-(Se-phospho)selenouridine(34) in tRNA + H2O = 5-methylaminomethyl-2-selenouridine(34) in tRNA + phosphate. In terms of biological role, involved in the post-transcriptional modification of the uridine at the wobble position (U34) of tRNA(Lys), tRNA(Glu) and tRNA(Gln). Catalyzes the conversion of 2-thiouridine (S2U-RNA) to 2-selenouridine (Se2U-RNA). Acts in a two-step process involving geranylation of 2-thiouridine (S2U) to S-geranyl-2-thiouridine (geS2U) and subsequent selenation of the latter derivative to 2-selenouridine (Se2U) in the tRNA chain. The chain is tRNA 2-selenouridine synthase from Shewanella sp. (strain MR-4).